The sequence spans 1335 residues: Regulatory-associated protein of mTOR (1335 aa).

Phosphoserine occurs at positions 44 and 122. S696 carries the phosphoserine; by MAPK8 modification. An O-linked (GlcNAc) threonine glycan is attached at T700. T706 carries the post-translational modification Phosphothreonine; by MAPK8. Phosphoserine; by RPS6KA1 is present on residues S719 and S721. S722 carries the post-translational modification Phosphoserine; by AMPK and RPS6KA1. S738 is subject to Phosphoserine. The tract at residues 749–771 is disordered; it reads GSSVAFSPGNLSTSSSASSTLGS. The span at 755-771 shows a compositional bias: low complexity; sequence SPGNLSTSSSASSTLGS. S791 carries the phosphoserine modification. S792 carries the post-translational modification Phosphoserine; by AMPK. S836 and S855 each carry phosphoserine. The segment covering 853–866 has biased composition (polar residues); sequence TSSLTQSAPASPTN. The disordered stretch occupies residues 853 to 942; that stretch reads TSSLTQSAPA…GPDQTTDDAD (90 aa). Residue S859 is modified to Phosphoserine; by MTOR. S863 bears the Phosphoserine; by MAPK8, MTOR and NLK mark. Position 865 is a phosphothreonine (T865). Residue S877 is modified to Phosphoserine. A compositionally biased stretch (low complexity) spans 877-887; it reads SPPASSTSSCS. Positions 888–898 are enriched in polar residues; the sequence is LTNDVAKQTVS. Glycyl lysine isopeptide (Lys-Gly) (interchain with G-Cter in ubiquitin) cross-links involve residues K932 and K948. Position 982 is a phosphoserine (S982). WD repeat units follow at residues 1020-1061, 1065-1106, 1121-1160, 1164-1203, 1209-1249, 1251-1291, and 1299-1335; these read NRNP…DYFH, PRYT…EKNP, TTRGAGMVVDWEQETGLLMSSGDVRIVRIWDTDRETKVQD, GADSCVTSLSCDSHRSLIVAGLGDGSIRVYDRRMALSECR, EHTA…SVNV, QIVK…NNIK, and QRVGAISCLAFHPHWPHLAVGSNDYYISVYSVEKRVR. At K1097 the chain carries N6-acetyllysine.

The protein belongs to the WD repeat RAPTOR family. In terms of assembly, part of the mechanistic target of rapamycin complex 1 (mTORC1) which contains MTOR, MLST8 and RPTOR. mTORC1 associates with AKT1S1/PRAS40, which inhibits its activity. mTORC1 associates with DEPTOR, which regulates its activity. mTORC1 binds to and is inhibited by FKBP12-rapamycin. Forms a complex with MTOR under both leucine-rich and -poor conditions. Interacts with (via TOS motifs) EIF4EBP1 and RPS6KB1; interaction is independent of its association with MTOR. Binds preferentially to poorly or non-phosphorylated forms of EIF4EBP1, and this binding is critical to the ability of MTOR to catalyze phosphorylation. Interacts with ULK1 in a nutrient-dependent manner; the interaction is reduced during starvation. Interacts with GTP-bound form of RagA/RRAGA or RagB/RRAGB and GDP-bound form of RagC/RRAGC or RagD/RRAGD, promoting recruitment of mTORC1 to the lysosomes. Interacts (when phosphorylated by AMPK) with 14-3-3 protein, leading to inhibition of its activity. Interacts with SPAG5; SPAG5 competes with MTOR for RPTOR-binding, resulting in decreased mTORC1 formation. Interacts with WAC; WAC positively regulates MTOR activity by promoting the assembly of the TTT complex composed of TELO2, TTI1 and TTI2 and the RUVBL complex composed of RUVBL1 and RUVBL2 into the TTT-RUVBL complex which leads to the dimerization of the mTORC1 complex and its subsequent activation. Interacts with G3BP1. The complex formed with G3BP1 and SPAG5 is increased by oxidative stress. Interacts with HTR6. Interacts with PIH1D1. Interacts with LARP1. Interacts with BRAT1. Interacts with SIK3. Interacts with SLC38A7; this interaction mediates the recruitment of mTORC1 to the lysosome and its subsequent activation. Insulin-stimulated phosphorylation at Ser-863 by MTOR and MAPK8 regulates mTORC1 activity. Phosphorylated at Ser-863 by NLK in response to stress, disrupting the interaction with small GTPases Rag (RagA/RRAGA, RagB/RRAGB, RagC/RRAGC and/or RagD/RRAGD), thereby preventing lysosome recruitment and activation of the mTORC1 complex. Osmotic stress also induces phosphorylation at Ser-696, Thr-706 and Ser-863 by MAPK8. Ser-863 phosphorylation is required for phosphorylation at Ser-855 and Ser-859. In response to nutrient limitation, phosphorylated at Ser-722 and Ser-792 by AMPK; phosphorylation promotes interaction with 14-3-3 proteins, leading to negative regulation of the mTORC1 complex. Phosphorylation at Ser-722 and Ser-792 by AMPK in response to glucose starvation inhibits O-GlcNAcylation by OGT and subsequent activation of mTORC1. In response to growth factors, phosphorylated at Ser-719, Ser-721 and Ser-722 by RPS6KA1, which stimulates mTORC1 activity. Phosphorylation at Ser-791 by PKA downstream of cAMP inhibits the mTORC1 complex. Phosphorylated at Ser-877 by TBK1, leading to negative regulation of the mTORC1 complex. Post-translationally, O-GlcNAcylated by OGT upon glucose sufficiency, promoting interaction with small GTPases Rag (RagA/RRAGA, RagB/RRAGB, RagC/RRAGC and/or RagD/RRAGD) and subsequent recruitment of mTORC1 to lysosomal membranes, leading to activation of the mTORC1 complex. Phosphorylation at Ser-722 and Ser-792 by AMPK in response to glucose starvation inhibits O-GlcNAcylation. In terms of processing, acetylation at Lys-1097 by EP300/p300 in response to leucine metabolite acetyl-coA promotes its activity, leading to activation of the mTORC1 complex. Acetylation is decreased in response to fasting. Phosphorylated at Ser-877 by TBK1, leading to negative regulation of the mTORC1 complex. Ubiquitinated, leading to its degradation by the proteasome. Deubiquitinated by OTUB1 via a non-catalytic mechanism. Ubiquitinated by an E3 ubiquitin ligase complex containing VHL.

The protein localises to the cytoplasm. The protein resides in the lysosome. It is found in the cytoplasmic granule. Component of the mechanistic target of rapamycin complex 1 (mTORC1), an evolutionarily conserved central nutrient sensor that stimulates anabolic reactions and macromolecule biosynthesis to promote cellular biomass generation and growth. In response to nutrients, growth factors or amino acids, mTORC1 is recruited to the lysosome membrane and promotes protein, lipid and nucleotide synthesis by phosphorylating several substrates, such as ribosomal protein S6 kinase (RPS6KB1 and RPS6KB2) and EIF4EBP1 (4E-BP1). In the same time, it inhibits catabolic pathways by phosphorylating the autophagy initiation components ULK1 and ATG13, as well as transcription factor TFEB, a master regulators of lysosomal biogenesis and autophagy. The mTORC1 complex is inhibited in response to starvation and amino acid depletion. Within the mTORC1 complex, RPTOR acts both as a molecular adapter, which (1) mediates recruitment of mTORC1 to lysosomal membranes via interaction with small GTPases Rag (RagA/RRAGA, RagB/RRAGB, RagC/RRAGC and/or RagD/RRAGD), and a (2) substrate-specific adapter, which promotes substrate specificity by binding to TOS motif-containing proteins and direct them towards the active site of the MTOR kinase domain for phosphorylation. mTORC1 complex regulates many cellular processes, such as odontoblast and osteoclast differentiation or neuronal transmission. mTORC1 complex in excitatory neuronal transmission is required for the prosocial behavior induced by the psychoactive substance lysergic acid diethylamide (LSD). The chain is Regulatory-associated protein of mTOR from Mus musculus (Mouse).